The chain runs to 129 residues: Histone H2B.1 (129 aa).

The span at 1-17 (MSAEKKPASKAPAEKKP) shows a compositional bias: basic and acidic residues. Residues 1–35 (MSAEKKPASKAPAEKKPAAKKTAPSADGKKRTKAR) are disordered. An N6-acetyllysine; alternate mark is found at K5 and K6. Residues K5 and K6 each participate in a glycyl lysine isopeptide (Lys-Gly) (interchain with G-Cter in SUMO); alternate cross-link. Phosphoserine is present on S9. Position 10 is an N6-acetyllysine (K10). The residue at position 15 (K15) is an N6-acetyllysine; alternate. A Glycyl lysine isopeptide (Lys-Gly) (interchain with G-Cter in SUMO); alternate cross-link involves residue K15. Residue K16 forms a Glycyl lysine isopeptide (Lys-Gly) (interchain with G-Cter in SUMO) linkage. Residue K122 forms a Glycyl lysine isopeptide (Lys-Gly) (interchain with G-Cter in ubiquitin) linkage.

This sequence belongs to the histone H2B family. In terms of assembly, the nucleosome is a histone octamer containing two molecules each of H2A, H2B, H3 and H4 assembled in one H3-H4 heterotetramer and two H2A-H2B heterodimers. The octamer wraps approximately 147 bp of DNA. Post-translationally, monoubiquitinated by the UBC2-BRE1 complex to form H2BK123ub1. H2BK123ub1 gives a specific tag for epigenetic transcriptional activation and is also prerequisite for H3K4me and H3K79me formation. H2BK123ub1 also modulates the formation of double-strand breaks during meiosis and is a prerequisite for DNA-damage checkpoint activation. Phosphorylated by STE20 to form H2BS10ph during progression through meiotic prophase. May be correlated with chromosome condensation. In terms of processing, acetylated by GCN5 to form H2BK11ac and H2BK16ac. H2BK16ac can also be formed by ESA1. Acetylation of N-terminal lysines and particularly formation of H2BK11acK16ac has a positive effect on transcription. Post-translationally, sumoylation to form H2BK6su or H2BK7su, and probably also H2BK16su or H2BK17su, occurs preferentially near the telomeres and represses gene transcription.

The protein localises to the nucleus. Its subcellular location is the chromosome. Its function is as follows. Core component of nucleosome. Nucleosomes wrap and compact DNA into chromatin, limiting DNA accessibility to the cellular machineries which require DNA as a template. Histones thereby play a central role in transcription regulation, DNA repair, DNA replication and chromosomal stability. DNA accessibility is regulated via a complex set of post-translational modifications of histones, also called histone code, and nucleosome remodeling. The sequence is that of Histone H2B.1 (HTB1) from Candida glabrata (strain ATCC 2001 / BCRC 20586 / JCM 3761 / NBRC 0622 / NRRL Y-65 / CBS 138) (Yeast).